An 819-amino-acid polypeptide reads, in one-letter code: Leucine--tRNA ligase (819 aa).

A 'HIGH' region motif is present at residues 40–51; sequence PYPSGAGLHVGH. A 'KMSKS' region motif is present at residues 600–604; that stretch reads KMSKS. An ATP-binding site is contributed by Lys-603.

The protein belongs to the class-I aminoacyl-tRNA synthetase family.

The protein resides in the cytoplasm. It carries out the reaction tRNA(Leu) + L-leucine + ATP = L-leucyl-tRNA(Leu) + AMP + diphosphate. The protein is Leucine--tRNA ligase of Chlamydia trachomatis serovar L2 (strain ATCC VR-902B / DSM 19102 / 434/Bu).